Reading from the N-terminus, the 148-residue chain is Large ribosomal subunit protein bL9 (148 aa).

Belongs to the bacterial ribosomal protein bL9 family.

Binds to the 23S rRNA. This Coprothermobacter proteolyticus (strain ATCC 35245 / DSM 5265 / OCM 4 / BT) protein is Large ribosomal subunit protein bL9.